The following is a 271-amino-acid chain: Phthiotriol/phenolphthiotriol dimycocerosates methyltransferase 1 (271 aa).

It belongs to the methyltransferase superfamily. Phthiotriol/phenolphthiotriol dimycocerosates methyltransferase family.

Catalyzes the methylation of the lipid moiety of the intermediate compounds phthiotriol and glycosylated phenolphthiotriol dimycoserosates to form phthiocerol dimycocerosates (DIM A) and glycosylated phenolphthiocerol dimycocerosates (PGL). This is Phthiotriol/phenolphthiotriol dimycocerosates methyltransferase 1 from Mycobacterium ulcerans (strain Agy99).